The primary structure comprises 436 residues: UPF0597 protein YhaM (436 aa).

This sequence belongs to the UPF0597 family.

This chain is UPF0597 protein YhaM, found in Salmonella gallinarum (strain 287/91 / NCTC 13346).